The sequence spans 162 residues: Sec-independent protein translocase protein TatB (162 aa).

Residues 1–21 (MFDIGFLEIIVIMVIALIVIG) form a helical membrane-spanning segment. Residues 86 to 162 (IQDEFGIDQE…ESTPESSNKS (77 aa)) are disordered. Residues 108 to 117 (FSGTQFNKAP) are compositionally biased toward polar residues. The span at 123-135 (PTTEESPSSTPET) shows a compositional bias: low complexity. The segment covering 147–162 (DVSAPSESTPESSNKS) has biased composition (polar residues).

Belongs to the TatB family. As to quaternary structure, the Tat system comprises two distinct complexes: a TatABC complex, containing multiple copies of TatA, TatB and TatC subunits, and a separate TatA complex, containing only TatA subunits. Substrates initially bind to the TatABC complex, which probably triggers association of the separate TatA complex to form the active translocon.

Its subcellular location is the cell inner membrane. Part of the twin-arginine translocation (Tat) system that transports large folded proteins containing a characteristic twin-arginine motif in their signal peptide across membranes. Together with TatC, TatB is part of a receptor directly interacting with Tat signal peptides. TatB may form an oligomeric binding site that transiently accommodates folded Tat precursor proteins before their translocation. This chain is Sec-independent protein translocase protein TatB, found in Hydrogenovibrio crunogenus (strain DSM 25203 / XCL-2) (Thiomicrospira crunogena).